The sequence spans 690 residues: Elongation factor G (690 aa).

Residues 8 to 283 enclose the tr-type G domain; it reads EKYRNIGIMA…AVVDYLPSPL (276 aa). GTP-binding positions include 17–24, 81–85, and 135–138; these read AHIDAGKT, DTPGH, and NKLD.

It belongs to the TRAFAC class translation factor GTPase superfamily. Classic translation factor GTPase family. EF-G/EF-2 subfamily.

It is found in the cytoplasm. Catalyzes the GTP-dependent ribosomal translocation step during translation elongation. During this step, the ribosome changes from the pre-translocational (PRE) to the post-translocational (POST) state as the newly formed A-site-bound peptidyl-tRNA and P-site-bound deacylated tRNA move to the P and E sites, respectively. Catalyzes the coordinated movement of the two tRNA molecules, the mRNA and conformational changes in the ribosome. The chain is Elongation factor G from Rhizorhabdus wittichii (strain DSM 6014 / CCUG 31198 / JCM 15750 / NBRC 105917 / EY 4224 / RW1) (Sphingomonas wittichii).